The following is a 141-amino-acid chain: Endoribonuclease YbeY (141 aa).

Zn(2+) is bound by residues histidine 105, histidine 109, and aspartate 115.

It belongs to the endoribonuclease YbeY family. Zn(2+) is required as a cofactor.

The protein resides in the cytoplasm. Functionally, single strand-specific metallo-endoribonuclease involved in late-stage 70S ribosome quality control and in maturation of the 3' terminus of the 16S rRNA. The polypeptide is Endoribonuclease YbeY (Chlorobaculum parvum (strain DSM 263 / NCIMB 8327) (Chlorobium vibrioforme subsp. thiosulfatophilum)).